The primary structure comprises 404 residues: Chorismate synthase (404 aa).

The NADP(+) site is built by R40 and R46. FMN contacts are provided by residues 133–135 (RSS), 266–267 (QA), G313, 328–332 (KPIPT), and R354. The tract at residues 283–320 (PGSQVHDPIEPREDGAQAYPRRTNHAGGTEGGTTTGMP) is disordered. Positions 337–357 (LDSVDTATGEPEPTRYERSDI) are disordered.

This sequence belongs to the chorismate synthase family. As to quaternary structure, homotetramer. Requires FMNH2 as cofactor.

It catalyses the reaction 5-O-(1-carboxyvinyl)-3-phosphoshikimate = chorismate + phosphate. It participates in metabolic intermediate biosynthesis; chorismate biosynthesis; chorismate from D-erythrose 4-phosphate and phosphoenolpyruvate: step 7/7. Its function is as follows. Catalyzes the anti-1,4-elimination of the C-3 phosphate and the C-6 proR hydrogen from 5-enolpyruvylshikimate-3-phosphate (EPSP) to yield chorismate, which is the branch point compound that serves as the starting substrate for the three terminal pathways of aromatic amino acid biosynthesis. This reaction introduces a second double bond into the aromatic ring system. The chain is Chorismate synthase from Salinibacter ruber (strain DSM 13855 / M31).